Here is a 126-residue protein sequence, read N- to C-terminus: Integrin alpha-M (126 aa).

Residues Asn-25, Asn-78, and Asn-106 are each glycosylated (N-linked (GlcNAc...) asparagine).

This sequence belongs to the integrin alpha chain family. In terms of assembly, heterodimer of an alpha and a beta chain. ITGAM associates with ITGB2. Found in a complex with CD177 and ITGB2/CD18. Interacts with JAM3. Interacts with THBD. Interacts with TMEM268; this interaction inhibits ITGAM degradation via the endosome-lysosome pathway.

The protein resides in the cell membrane. It is found in the membrane raft. In terms of biological role, integrin ITGAM/ITGB2 is implicated in various adhesive interactions of monocytes, macrophages and granulocytes as well as in mediating the uptake of complement-coated particles. It is identical with CR-3, the receptor for the iC3b fragment of the third complement component. It probably recognizes the R-G-D peptide in C3b. Integrin ITGAM/ITGB2 is also a receptor for fibrinogen, factor X and ICAM1. It recognizes P1 and P2 peptides of fibrinogen gamma chain. Regulates neutrophil migration. In association with beta subunit ITGB2/CD18, required for CD177-PRTN3-mediated activation of TNF primed neutrophils. May regulate phagocytosis-induced apoptosis in extravasated neutrophils. May play a role in mast cell development. Required with TYROBP/DAP12 in microglia to control production of microglial superoxide ions which promote the neuronal apoptosis that occurs during brain development. The sequence is that of Integrin alpha-M (ITGAM) from Cavia porcellus (Guinea pig).